Reading from the N-terminus, the 432-residue chain is Killer cell immunoglobulin-like receptor 3DL1 (432 aa).

Positions 1-21 (MLLWFLSLVCSGFFLVQRMSA) are cleaved as a signal peptide. The Extracellular portion of the chain corresponds to 22 to 335 (HVGSHDKPFL…ADTKTNNYKN (314 aa)). Ig-like C2-type domains lie at 42–100 (GQNV…HPQY), 135–202 (GGNV…NSYY), and 238–301 (GETM…FRNA). An N-linked (GlcNAc...) asparagine glycan is attached at Asn-44. The cysteines at positions 49 and 95 are disulfide-linked. An N-linked (GlcNAc...) asparagine glycan is attached at Asn-137. Intrachain disulfides connect Cys-142-Cys-195 and Cys-245-Cys-294. N-linked (GlcNAc...) asparagine glycosylation occurs at Asn-300. The chain crosses the membrane as a helical span at residues 336–356 (LHILTGLLVTMVLVVIIIFYS). The Cytoplasmic segment spans residues 357 to 432 (CYFSKQNKSQ…DTIVYMEIMK (76 aa)).

Belongs to the immunoglobulin superfamily.

It localises to the cell membrane. Functionally, receptor on natural killer (NK) cells. Inhibits the activity of NK cells thus preventing cell lysis. This Mus musculus (Mouse) protein is Killer cell immunoglobulin-like receptor 3DL1 (Kir3dl1).